Reading from the N-terminus, the 439-residue chain is MAAQTTEKLDQLDLNVQAAPTADQVPAEAEEDSDDAQDEGAAEAGAAGAGSTLADKKKKKKKPKKKSKKKGGAKVQSEPPRVPVSNLFPNGQYPEGEIVEYLNDNAYRTTNEEKRYLDRMNNDFLQEYRQGAEVHRQVRQYAQKNIKPGQTLTEIAEGIEDSVRALTGHSGLEEGDNIKGGMGFPCGLSINHCAAHYTPNAGNKMVLNEGDVMKVDFGAHLNGRIVDSAFTMTFDPVYDPLLAAVKDATNTGIREAGIDVRMSDIGAAIQEAMESYEVEINGTMHPVKCIRNLNGHNIDQHVIHGGKSVPIVKSTDQTKMEEGEVFAIETFGSTGKGYVREEMETSHYALAADAPNVPLRLSSAKNLLNLINKNFGTLPFCRRYIDRLGQDKYLLGLNNLVSSGIVQDYPPLCDIKGSYTAQYEHVCFYFGVFSTLIVY.

The interval 1–90 is disordered; that stretch reads MAAQTTEKLD…RVPVSNLFPN (90 aa). Acidic residues predominate over residues 28–41; sequence EAEEDSDDAQDEGA. The segment covering 56–72 has biased composition (basic residues); the sequence is KKKKKKKPKKKSKKKGG. Histidine 196 lines the substrate pocket. Residues aspartate 216, aspartate 227, and histidine 296 each contribute to the a divalent metal cation site. Histidine 304 contributes to the substrate binding site. Positions 329 and 424 each coordinate a divalent metal cation.

The protein belongs to the peptidase M24A family. Methionine aminopeptidase eukaryotic type 2 subfamily. The cofactor is Co(2+). Zn(2+) is required as a cofactor. Mn(2+) serves as cofactor. Requires Fe(2+) as cofactor.

It localises to the cytoplasm. It carries out the reaction Release of N-terminal amino acids, preferentially methionine, from peptides and arylamides.. Functionally, cotranslationally removes the N-terminal methionine from nascent proteins. The N-terminal methionine is often cleaved when the second residue in the primary sequence is small and uncharged (Met-Ala-, Cys, Gly, Pro, Ser, Thr, or Val). The chain is Methionine aminopeptidase 2-2 from Penicillium rubens (strain ATCC 28089 / DSM 1075 / NRRL 1951 / Wisconsin 54-1255) (Penicillium chrysogenum).